We begin with the raw amino-acid sequence, 860 residues long: MRFTSIEAVALTAVSLASADELAYSPPYYPSPWANGQGDWAEAYQRAVDIVSQMTLAEKVNLTTGTGWELELCVGQTGGVPRLGIPGMCAQDSPLGVRDSDYNSAFPAGVNVAATWDKNLAYLRGQAMGQEFSDKGADIQLGPAAGPLGRSPDGGRNWEGFSPDPALSGVLFAETIKGIQDAGVVATAKHYIAYEQEHFRQAPEAQGYGFNITESGSANLDDKTMHELYLWPFADAIRAGAGAVMCSYNQINNSYGCQNSYTLNKLLKAELGFQGFVMSDWAAHHAGVSGALAGLDMSMPGDVDYDSGTSYWGTNLTISVLNGTVPQWRVDDMAVRIMAAYYKVGRDRLWTPPNFSSWTRDEYGFKYYYVSEGPYEKVNQFVNVQRNHSELIRRIGADSTVLLKNDGALPLTGKERLVALIGEDAGSNPYGANGCSDRGCDNGTLAMGWGSGTANFPYLVTPEQAISNEVLKNKNGVFTATDNWAIDQIEALAKTASVSLVFVNADSGEGYINVDGNLGDRRNLTLWRNGDNVIKAAASNCNNTIVIIHSVGPVLVNEWYDNPNVTAILWGGLPGQESGNSLADVLYGRVNPGAKSPFTWGKTREAYQDYLYTEPNNGNGAPQEDFVEGVFIDYRGFDKRNETPIYEFGYGLSYTTFNYSNLQVEVLSAPAYEPASGETEAAPTFGEVGNASDYLYPDGLQRITKFIYPWLNSTDLEASSGDASYGQDASDYLPEGATDGSAQPILPAGGGAGGNPRLYDELIRVSVTIKNTGKVAGDEVPQLYVSLGGPNEPKIVLRQFERITLQPSKETQWSTTLTRRDLANWNVETQDWEITSYPKMVFAGSSSRKLPLRASLPTVH.

A signal peptide spans 1-19 (MRFTSIEAVALTAVSLASA). 3 N-linked (GlcNAc...) asparagine glycosylation sites follow: Asn-61, Asn-211, and Asn-252. Asp-280 is an active-site residue. Asn-315, Asn-322, Asn-354, Asn-387, Asn-442, Asn-523, Asn-542, Asn-564, Asn-658, Asn-690, and Asn-712 each carry an N-linked (GlcNAc...) asparagine glycan.

This sequence belongs to the glycosyl hydrolase 3 family.

The protein resides in the secreted. The catalysed reaction is Hydrolysis of terminal, non-reducing beta-D-glucosyl residues with release of beta-D-glucose.. Its pathway is glycan metabolism; cellulose degradation. Its function is as follows. Beta-glucosidases are one of a number of cellulolytic enzymes involved in the degradation of cellulosic biomass. Catalyzes the last step releasing glucose from the inhibitory cellobiose. In Aspergillus niger (strain ATCC MYA-4892 / CBS 513.88 / FGSC A1513), this protein is Probable beta-glucosidase A (bglA).